A 499-amino-acid chain; its full sequence is Type-1 glutamine synthetase 1 (499 aa).

Residues 50–146 (PQLKFIRVCW…IFGEFFYLDN (97 aa)) form the GS beta-grasp domain. A GS catalytic domain is found at 158–499 (PRNSLQRAID…DQILKLLELF (342 aa)).

Belongs to the glutamine synthetase family.

It carries out the reaction L-glutamate + NH4(+) + ATP = L-glutamine + ADP + phosphate + H(+). The chain is Type-1 glutamine synthetase 1 (glnA1) from Dictyostelium discoideum (Social amoeba).